The following is a 238-amino-acid chain: Orotidine 5'-phosphate decarboxylase (238 aa).

Substrate-binding positions include Asp-10, Lys-32, 59 to 68 (DLKLHDIPNT), Thr-122, Arg-184, Gln-193, Gly-213, and Arg-214. The active-site Proton donor is Lys-61.

This sequence belongs to the OMP decarboxylase family. Type 1 subfamily. Homodimer.

It carries out the reaction orotidine 5'-phosphate + H(+) = UMP + CO2. It functions in the pathway pyrimidine metabolism; UMP biosynthesis via de novo pathway; UMP from orotate: step 2/2. In terms of biological role, catalyzes the decarboxylation of orotidine 5'-monophosphate (OMP) to uridine 5'-monophosphate (UMP). The sequence is that of Orotidine 5'-phosphate decarboxylase from Bacillus cereus (strain ATCC 10987 / NRS 248).